The sequence spans 738 residues: LPS-assembly protein LptD (738 aa).

The signal sequence occupies residues 1-26; that stretch reads MEHKRNNILLAGLFFLLLGLVSIARA.

The protein belongs to the LptD family. As to quaternary structure, component of the lipopolysaccharide transport and assembly complex. Interacts with LptE and LptA.

It is found in the cell outer membrane. Functionally, together with LptE, is involved in the assembly of lipopolysaccharide (LPS) at the surface of the outer membrane. The polypeptide is LPS-assembly protein LptD (Nitrosococcus oceani (strain ATCC 19707 / BCRC 17464 / JCM 30415 / NCIMB 11848 / C-107)).